The chain runs to 360 residues: D-alanine--D-alanine ligase (360 aa).

In terms of domain architecture, ATP-grasp spans 146–352 (KLCVADAGIA…FPELAERLLQ (207 aa)). 179-234 (EEKFIYPFFVKPANLGSSIGISKVHHREQLPAALKSACSLDSKIVVEKAITGREIE) is an ATP binding site. Positions 305, 319, and 321 each coordinate Mg(2+).

It belongs to the D-alanine--D-alanine ligase family. Mg(2+) serves as cofactor. It depends on Mn(2+) as a cofactor.

The protein localises to the cytoplasm. It carries out the reaction 2 D-alanine + ATP = D-alanyl-D-alanine + ADP + phosphate + H(+). Its pathway is cell wall biogenesis; peptidoglycan biosynthesis. Its function is as follows. Cell wall formation. In Pelodictyon phaeoclathratiforme (strain DSM 5477 / BU-1), this protein is D-alanine--D-alanine ligase.